Consider the following 581-residue polypeptide: Arginine--tRNA ligase (581 aa).

A 'HIGH' region motif is present at residues 126–136 (PNLAKEMHVGH).

It belongs to the class-I aminoacyl-tRNA synthetase family. As to quaternary structure, monomer.

The protein localises to the cytoplasm. The enzyme catalyses tRNA(Arg) + L-arginine + ATP = L-arginyl-tRNA(Arg) + AMP + diphosphate. The chain is Arginine--tRNA ligase from Shewanella pealeana (strain ATCC 700345 / ANG-SQ1).